The primary structure comprises 155 residues: uncharacterized protein (155 aa).

Disordered regions lie at residues 24 to 63 and 80 to 155; these read RVGY…VVLK and KAAK…DENE. Acidic residues predominate over residues 43-56; that stretch reads PDEDGNESDKEDEQ. Serine 50 bears the Phosphoserine mark. Lysine 108 bears the N6-acetyllysine mark. A compositionally biased stretch (polar residues) spans 128-147; that stretch reads KQSPVRKNSQKQIKNSSLLS. Serine 130, serine 147, and serine 150 each carry phosphoserine.

This is an uncharacterized protein from Rattus norvegicus (Rat).